A 627-amino-acid polypeptide reads, in one-letter code: 1-deoxy-D-xylulose-5-phosphate synthase (627 aa).

Residues histidine 80 and 121 to 123 (GHS) each bind thiamine diphosphate. Aspartate 152 lines the Mg(2+) pocket. Thiamine diphosphate is bound by residues 153–154 (GA), asparagine 181, tyrosine 288, and glutamate 370. Asparagine 181 contacts Mg(2+).

This sequence belongs to the transketolase family. DXPS subfamily. In terms of assembly, homodimer. Mg(2+) serves as cofactor. It depends on thiamine diphosphate as a cofactor.

It carries out the reaction D-glyceraldehyde 3-phosphate + pyruvate + H(+) = 1-deoxy-D-xylulose 5-phosphate + CO2. Its pathway is metabolic intermediate biosynthesis; 1-deoxy-D-xylulose 5-phosphate biosynthesis; 1-deoxy-D-xylulose 5-phosphate from D-glyceraldehyde 3-phosphate and pyruvate: step 1/1. In terms of biological role, catalyzes the acyloin condensation reaction between C atoms 2 and 3 of pyruvate and glyceraldehyde 3-phosphate to yield 1-deoxy-D-xylulose-5-phosphate (DXP). The sequence is that of 1-deoxy-D-xylulose-5-phosphate synthase from Aliivibrio fischeri (strain MJ11) (Vibrio fischeri).